Consider the following 623-residue polypeptide: Glutathione import ATP-binding protein GsiA (623 aa).

ABC transporter domains lie at 15 to 269 and 314 to 564; these read VENL…RALL and LRVR…RKLL. Residues 49–56 and 357–364 contribute to the ATP site; these read GESGSGKS.

Belongs to the ABC transporter superfamily. Glutathione importer (TC 3.A.1.5.11) family. The complex is composed of two ATP-binding proteins (GsiA), two transmembrane proteins (GsiC and GsiD) and a solute-binding protein (GsiB).

It localises to the cell inner membrane. It catalyses the reaction glutathione(out) + ATP + H2O = glutathione(in) + ADP + phosphate + H(+). Part of the ABC transporter complex GsiABCD involved in glutathione import. Responsible for energy coupling to the transport system. This chain is Glutathione import ATP-binding protein GsiA, found in Escherichia coli O6:H1 (strain CFT073 / ATCC 700928 / UPEC).